A 606-amino-acid polypeptide reads, in one-letter code: Aspartate--tRNA(Asp/Asn) ligase (606 aa).

Residue Glu177 coordinates L-aspartate. Residues 201-204 (QIFK) form an aspartate region. Arg223 is a binding site for L-aspartate. ATP is bound by residues 223–225 (RDE) and Gln232. L-aspartate is bound at residue His461. Residue Glu499 participates in ATP binding. Arg506 contacts L-aspartate. ATP is bound at residue 551-554 (GLDR).

This sequence belongs to the class-II aminoacyl-tRNA synthetase family. Type 1 subfamily. As to quaternary structure, homodimer.

The protein resides in the cytoplasm. The catalysed reaction is tRNA(Asx) + L-aspartate + ATP = L-aspartyl-tRNA(Asx) + AMP + diphosphate. Its function is as follows. Aspartyl-tRNA synthetase with relaxed tRNA specificity since it is able to aspartylate not only its cognate tRNA(Asp) but also tRNA(Asn). Reaction proceeds in two steps: L-aspartate is first activated by ATP to form Asp-AMP and then transferred to the acceptor end of tRNA(Asp/Asn). The sequence is that of Aspartate--tRNA(Asp/Asn) ligase from Prochlorococcus marinus (strain MIT 9211).